We begin with the raw amino-acid sequence, 1097 residues long: Cyclin-T (1097 aa).

Disordered stretches follow at residues 319-782 (SNIT…SNGI), 804-936 (LLKP…SLQA), and 985-1097 (AAPV…YNKK). A compositionally biased stretch (basic and acidic residues) spans 332–350 (DSRDRDRDRERERERERDP). 4 stretches are compositionally biased toward low complexity: residues 373–390 (SSSV…SSSS), 420–456 (PSSH…GRPS), 467–478 (GMPPVGVGMPPH), and 489–511 (PQQP…SGMS). Residues 580–591 (LPYSQSQSYGHM) show a composition bias toward polar residues. Over residues 592–606 (QQQPVPQSQQQQMPP) the composition is skewed to low complexity. The segment covering 609-620 (SQHSLQSKNSLF) has biased composition (polar residues). Positions 652–675 (HDYKLNSHPRDKESPKKERLTPTK) are enriched in basic and acidic residues. Residues 687 to 698 (GSGNSSSGSGSS) are compositionally biased toward low complexity. The segment covering 860 to 870 (GEIKEESSSKS) has biased composition (basic and acidic residues). Over residues 871–883 (EKKKKKDKHKHKE) the composition is skewed to basic residues. Basic and acidic residues predominate over residues 884-895 (KDKSKDKTEKEE). Ser-916 carries the phosphoserine modification. Residues 993–1007 (GAGGGGYSSSGGSSS) show a composition bias toward gly residues. A compositionally biased stretch (basic and acidic residues) spans 1016 to 1031 (SDRDRDKESKKNKSQD). Positions 1037-1050 (GAGGGIFNPLGGAG) are enriched in gly residues. The span at 1087–1097 (APPPMPVYNKK) shows a compositional bias: pro residues.

The protein belongs to the cyclin family. Cyclin C subfamily. In terms of assembly, component of the super elongation complex (SEC), at least composed of Ell, Cdk9, cyclin-T (CycT), lilli and ear. Associates with CDK9 to form P-TEFb.

The protein resides in the nucleus. In terms of biological role, regulatory subunit of the cyclin-dependent kinase pair (CDK9/cyclin T) complex, also called positive transcription elongation factor B (P-TEFb), which is proposed to facilitate the transition from abortive to production elongation by phosphorylating the CTD (carboxy-terminal domain) of the large subunit of RNA polymerase II (RNAP II). In Drosophila melanogaster (Fruit fly), this protein is Cyclin-T (CycT).